The sequence spans 727 residues: Cyclin-T1 (727 aa).

The residue at position 117 (Ser117) is a Phosphoserine. The short motif at 253–270 (KRIWNWRAWQADRKTKAD) is the Nuclear localization signal element. Lys343 participates in a covalent cross-link: Glycyl lysine isopeptide (Lys-Gly) (interchain with G-Cter in SUMO2). At Ser389 the chain carries Phosphoserine. Residues 389–420 (SLKEYRAKHAEELAAQKRQLENMEANVKSQYA) adopt a coiled-coil conformation. An N6-acetyllysine modification is found at Lys391. Residue Lys416 forms a Glycyl lysine isopeptide (Lys-Gly) (interchain with G-Cter in SUMO2) linkage. Ser417 and Ser475 each carry ADP-ribosylserine. Positions 481 to 551 (IKMRIKVHTA…RLGDPKHSSQ (71 aa)) are histidine-rich domain (HRD). Lys482 participates in a covalent cross-link: Glycyl lysine isopeptide (Lys-Gly) (interchain with G-Cter in SUMO2). Lys486 carries the post-translational modification N6-(ADP-ribosyl)lysine. The segment covering 487–507 (VHTAADKHNSVDDSVTKNREH) has biased composition (basic and acidic residues). 2 disordered regions span residues 487-631 (VHTA…QPSC) and 691-727 (YMNP…PLPK). His488 bears the ADP-ribosylhistidine mark. A phosphoserine mark is found at Ser496 and Ser500. Residues 508-531 (KEKHKTHPSNHHHHHNHHSHKHSH) are compositionally biased toward basic residues. His531 is subject to ADP-ribosylhistidine. ADP-ribosylserine occurs at positions 532, 550, and 553. At His557 the chain carries ADP-ribosylhistidine. Over residues 561–571 (SLSSSFSSSSS) the composition is skewed to low complexity. Position 564 is an ADP-ribosylserine (Ser564). Ser565 is modified (phosphoserine). Over residues 616–631 (GHSSDTSGLHFSQPSC) the composition is skewed to polar residues. The span at 711-727 (PPPLPSEPPPPLPPLPK) shows a compositional bias: pro residues.

It belongs to the cyclin family. Cyclin C subfamily. In terms of assembly, cyclin-T1 is the predominant cyclin that associates with CDK9 to form a heterodimer called P-TEFb. P-TEFb forms a complex with AFF4/AF5Q31. Component of a complex which is at least composed of HTATSF1/Tat-SF1, P-TEFb complex, RNA pol II, SUPT5H, and NCL/nucleolin. Component of the 7SK snRNP complex at least composed of P-TEFb (composed of CDK9 and CCNT1/cyclin-T1), HEXIM1, HEXIM2, BCDIN3, SART3 proteins and 7SK and U6 snRNAs. Interacts (via central region) with ZMYND8 (via N-terminus); the interaction is direct and the association appears to occur between homodimeric ZMYND8 and the activated form of the P-TEFb complex. Interacts with BRD4, targets chromatin binding. Interacts with JMJD6. Interacts with MDFIC. Interacts with HSF1. Interacts with HTATSF1. Interacts with TBX21. As to quaternary structure, (Microbial infection) Binds to BIV Tat, however Tat binds TAR RNA in a Cyc-T1-independent mode. In terms of processing, ADP-ribosylation on serine residues by PARP1 in response to DNA damage disrupts the phase separation activity of CCNT1, thereby preventing activation of CDK9.

It localises to the nucleus. Its function is as follows. Regulatory subunit of the cyclin-dependent kinase pair (CDK9/cyclin-T1) complex, also called positive transcription elongation factor B (P-TEFb), which facilitates the transition from abortive to productive elongation by phosphorylating the CTD (C-terminal domain) of the large subunit of RNA polymerase II (RNA Pol II). Required to activate the protein kinase activity of CDK9: acts by mediating formation of liquid-liquid phase separation (LLPS) that enhances binding of P-TEFb to the CTD of RNA Pol II. The sequence is that of Cyclin-T1 (CCNT1) from Bos taurus (Bovine).